The primary structure comprises 291 residues: Protease HtpX homolog (291 aa).

2 helical membrane passes run 4–24 (IALF…TASL) and 38–58 (LGAL…ISLL). H144 provides a ligand contact to Zn(2+). E145 is a catalytic residue. Zn(2+) is bound at residue H148. Transmembrane regions (helical) follow at residues 159–179 (LIQG…GYFI) and 197–217 (VTTV…VAWF). E222 contributes to the Zn(2+) binding site.

This sequence belongs to the peptidase M48B family. Zn(2+) is required as a cofactor.

It is found in the cell inner membrane. The chain is Protease HtpX homolog from Leptothrix cholodnii (strain ATCC 51168 / LMG 8142 / SP-6) (Leptothrix discophora (strain SP-6)).